We begin with the raw amino-acid sequence, 840 residues long: Lon protease homolog 2, peroxisomal (840 aa).

The Lon N-terminal domain occupies 13 to 222 (LPLLCTHDGV…KALPLLTRQI (210 aa)). Residue 375 to 382 (GPPGVGKT) participates in ATP binding. The interval 583–606 (QKVSRSEAPTEQHAEQNTDSKVED) is disordered. The segment covering 584–606 (KVSRSEAPTEQHAEQNTDSKVED) has biased composition (basic and acidic residues). The Lon proteolytic domain maps to 641–825 (LTLPGVAIGL…DEVLNAAFDG (185 aa)). Catalysis depends on residues serine 731 and lysine 774. A Microbody targeting signal motif is present at residues 838–840 (SKL).

It belongs to the peptidase S16 family.

Its subcellular location is the peroxisome matrix. It carries out the reaction Hydrolysis of proteins in presence of ATP.. ATP-dependent serine protease that mediates the selective degradation of misfolded and unassembled polypeptides in the peroxisomal matrix. Necessary for type 2 peroxisome targeting signal (PTS2)-containing protein processing and facilitates peroxisome matrix protein import. The chain is Lon protease homolog 2, peroxisomal (lonp2) from Danio rerio (Zebrafish).